The following is a 260-amino-acid chain: Small ribosomal subunit protein eS1 (260 aa).

At alanine 2 the chain carries N-acetylalanine; partial.

It belongs to the eukaryotic ribosomal protein eS1 family. In terms of assembly, component of the small ribosomal subunit. Mature ribosomes consist of a small (40S) and a large (60S) subunit. The 40S subunit contains about 33 different proteins and 1 molecule of RNA (18S). The 60S subunit contains about 49 different proteins and 3 molecules of RNA (25S, 5.8S and 5S).

The protein localises to the cytoplasm. In Mycosarcoma maydis (Corn smut fungus), this protein is Small ribosomal subunit protein eS1.